The chain runs to 91 residues: MSEKTTAQERNHRKVREGYVVSDKMDKTVVVAVENRFKHPLYGKIIRRTTKYKAHDEANIAGVGDRVRLMETRPLSATKRWRVVEILEKAK.

This sequence belongs to the universal ribosomal protein uS17 family. As to quaternary structure, part of the 30S ribosomal subunit.

Its function is as follows. One of the primary rRNA binding proteins, it binds specifically to the 5'-end of 16S ribosomal RNA. In Thermobifida fusca (strain YX), this protein is Small ribosomal subunit protein uS17.